The following is a 444-amino-acid chain: Tol-Pal system protein TolB (444 aa).

The first 19 residues, 1-19 (MRNIIYFILSLLFSVTSYA), serve as a signal peptide directing secretion.

This sequence belongs to the TolB family. As to quaternary structure, the Tol-Pal system is composed of five core proteins: the inner membrane proteins TolA, TolQ and TolR, the periplasmic protein TolB and the outer membrane protein Pal. They form a network linking the inner and outer membranes and the peptidoglycan layer.

The protein localises to the periplasm. In terms of biological role, part of the Tol-Pal system, which plays a role in outer membrane invagination during cell division and is important for maintaining outer membrane integrity. The polypeptide is Tol-Pal system protein TolB (Rickettsia africae (strain ESF-5)).